A 47-amino-acid polypeptide reads, in one-letter code: Large ribosomal subunit protein bL34 (47 aa).

Belongs to the bacterial ribosomal protein bL34 family.

The protein is Large ribosomal subunit protein bL34 of Rhodococcus erythropolis (strain PR4 / NBRC 100887).